The primary structure comprises 165 residues: E3 ubiquitin-protein ligase RNF181 (165 aa).

An RING-type; atypical zinc finger spans residues Cys88 to Arg129. A disordered region spans residues Asp136–Thr165. Thr165 bears the Phosphothreonine mark.

It belongs to the RNF181 family. In terms of assembly, directly interacts with ITGA2B and, as a result, with integrin ITGA2B/ITGB3. There is no evidence that integrin ITGA2B/ITGB3 is an endogenous substrate for RNF181-directed ubiquitination. Post-translationally, auto-ubiquitinated as part of the enzymatic reaction.

It carries out the reaction S-ubiquitinyl-[E2 ubiquitin-conjugating enzyme]-L-cysteine + [acceptor protein]-L-lysine = [E2 ubiquitin-conjugating enzyme]-L-cysteine + N(6)-ubiquitinyl-[acceptor protein]-L-lysine.. Its pathway is protein modification; protein ubiquitination. Functionally, E3 ubiquitin-protein ligase which accepts ubiquitin from an E2 ubiquitin-conjugating enzyme in the form of a thioester and then directly transfers the ubiquitin to targeted substrates. Catalyzes monoubiquitination of 26S proteasome subunit PSMC2/RPT1. The chain is E3 ubiquitin-protein ligase RNF181 (Rnf181) from Rattus norvegicus (Rat).